Reading from the N-terminus, the 149-residue chain is Large ribosomal subunit protein uL22c (149 aa).

The protein belongs to the universal ribosomal protein uL22 family. Part of the 50S ribosomal subunit.

Its subcellular location is the plastid. It localises to the chloroplast. This protein binds specifically to 23S rRNA. Its function is as follows. The globular domain of the protein is located near the polypeptide exit tunnel on the outside of the subunit, while an extended beta-hairpin is found that lines the wall of the exit tunnel in the center of the 70S ribosome. This chain is Large ribosomal subunit protein uL22c (rpl22), found in Hordeum vulgare (Barley).